Consider the following 466-residue polypeptide: 23S rRNA (uracil(1939)-C(5))-methyltransferase RlmD (466 aa).

The tract at residues 1–22 (MSSQPNPTSHPEAASAASAASN) is disordered. A TRAM domain is found at 17 to 81 (ASAASNDPVV…PSYEQAHLVE (65 aa)). The [4Fe-4S] cluster site is built by Cys-94, Cys-100, Cys-103, and Cys-182. 6 residues coordinate S-adenosyl-L-methionine: Gln-290, Phe-319, Asn-324, Glu-340, Asn-368, and Asp-389. Residue Cys-422 is the Nucleophile of the active site.

Belongs to the class I-like SAM-binding methyltransferase superfamily. RNA M5U methyltransferase family. RlmD subfamily.

The catalysed reaction is uridine(1939) in 23S rRNA + S-adenosyl-L-methionine = 5-methyluridine(1939) in 23S rRNA + S-adenosyl-L-homocysteine + H(+). Its function is as follows. Catalyzes the formation of 5-methyl-uridine at position 1939 (m5U1939) in 23S rRNA. The sequence is that of 23S rRNA (uracil(1939)-C(5))-methyltransferase RlmD from Cupriavidus metallidurans (strain ATCC 43123 / DSM 2839 / NBRC 102507 / CH34) (Ralstonia metallidurans).